An 892-amino-acid chain; its full sequence is MSQQTTIRKLAELVNTPVEKLLEQLAGAGMKFSGPDQVVTSTEKMKLLGFLRRTHGKSDVSVGTVREAPKKITLNRRRLQEVTVNAGRNKTTVNVEVRQKRTYVKTPESEYHTPTKPPIELADAERVEILRKLEESRQRNLAEQQRLAEVDRQRVEEQERKRREEEQAELERQKTESRVVEEILVKTDSNSVKPVSKPISEERTRALPRTVRPTPAARPSVSRSDDRNSNGGVRHKPRGSHVIVSDEDDSARRFVGQMHLTAAERARRGSNTRGKGGGSHRGATHRGNENSIRSSGAHGFERPTVAVVREVAVGDTITVADLAQKLALKSGDMVKALFKMGVMVTITQTIDHDTAVLVSEELGHKVTRASSSDFEDALLAHTEEVHGEPVPRPPVVTIMGHVDHGKTSLLDYIRRTKIAVGEAGGITQHIGAYHVETPRGVISFLDTPGHAAFTSMRARGAKITDIVVLVVAADDGVMPQTKEAVQHARAAGVPLIVAVSKIDKSTADPQRVKNELLTESVVAEEFGGDTQFVELSAKTGVGVDALLDAISIQAEVLELKAVIEGRATGTVIESSLDKGRGPVATVLVQQGRLKKGDYLVCGTHYGRVRALFDEVGHQPLAASPSIPVQVLGLSGVPDAGDDFVVVDDERLAKDVAQQREAKRRESRLVTSAGNRMEDILAQMGKGENQQVLNLLIKADVQGSLEALKQALVALSNDDIRINVIHVGVGGITESDANSAVTSKATVIGFNVRADASARKIIEANGVDLRYFSIIYDVIDQVKQVASGLLGVEIREEIIGVAEVRDVFRSSKFGAVAGCMIIEGVVKRSKPIRVLRDNTVVFEGELESLRRFKENVDEVRNSTECGIGVKAYNDVRVGDSIECFERIEVARTL.

2 disordered regions span residues 144 to 176 and 189 to 298; these read QQRL…QKTE and SNSV…SGAH. Over residues 207-219 the composition is skewed to low complexity; the sequence is LPRTVRPTPAARP. The tr-type G domain occupies 391 to 560; sequence PRPPVVTIMG…SIQAEVLELK (170 aa). GTP is bound by residues 400 to 407, 446 to 450, and 500 to 503; these read GHVDHGKT, DTPGH, and SKID.

Belongs to the TRAFAC class translation factor GTPase superfamily. Classic translation factor GTPase family. IF-2 subfamily.

The protein localises to the cytoplasm. Its function is as follows. One of the essential components for the initiation of protein synthesis. Protects formylmethionyl-tRNA from spontaneous hydrolysis and promotes its binding to the 30S ribosomal subunits. Also involved in the hydrolysis of GTP during the formation of the 70S ribosomal complex. The sequence is that of Translation initiation factor IF-2 from Xylella fastidiosa (strain M12).